The primary structure comprises 640 residues: Threonine--tRNA ligase (640 aa).

Residues 1-61 (MLVVTLPDGS…DKDSQLAIIT (61 aa)) enclose the TGS domain. Residues 242–533 (DHRRLGKQLD…LIENHTGNMP (292 aa)) form a catalytic region. The Zn(2+) site is built by C333, H384, and H510.

The protein belongs to the class-II aminoacyl-tRNA synthetase family. As to quaternary structure, homodimer. Requires Zn(2+) as cofactor.

It localises to the cytoplasm. It carries out the reaction tRNA(Thr) + L-threonine + ATP = L-threonyl-tRNA(Thr) + AMP + diphosphate + H(+). Its function is as follows. Catalyzes the attachment of threonine to tRNA(Thr) in a two-step reaction: L-threonine is first activated by ATP to form Thr-AMP and then transferred to the acceptor end of tRNA(Thr). Also edits incorrectly charged L-seryl-tRNA(Thr). The polypeptide is Threonine--tRNA ligase (Polynucleobacter necessarius subsp. necessarius (strain STIR1)).